The sequence spans 277 residues: Myelin proteolipid protein (277 aa).

Residues 1-10 lie on the Cytoplasmic side of the membrane; that stretch reads MGLLECCARC. S-palmitoyl cysteine attachment occurs at residues C6, C7, and C10. Residues 11-36 form a helical membrane-spanning segment; that stretch reads LVGAPFASLVATGLCFFGVALFCGCG. Residues 37–59 are Extracellular-facing; it reads HEALTGTEKLIETYFSKNYQDYE. The chain crosses the membrane as a helical span at residues 60-88; that stretch reads YLINVIHAFQYVIYGTASFFFLYGALLLA. At 89–151 the chain is on the cytoplasmic side; that stretch reads EGFYTTGAVR…LGKWLGHPDK (63 aa). C109 carries the S-palmitoyl cysteine lipid modification. S114 is modified (phosphoserine). T116 and T118 each carry phosphothreonine. Residues C139 and C141 are each lipidated (S-palmitoyl cysteine). A helical membrane pass occupies residues 152-178; sequence FVGITYALTVVWLLVFACSAVPVYIYF. Over 179 to 238 the chain is Extracellular; it reads NTWTTCQSIAFPSKTSASIGTLCADARMYGVLPWNAFPGKVCGSNLLSICKTAEFQMTFH. Disulfide bonds link C184–C228 and C201–C220. T199 carries O-palmitoyl threonine lipidation. A helical transmembrane segment spans residues 239–268; sequence LFIAAFVGAAATLVSLLTFMIAATYNFAVL. Over 269-277 the chain is Cytoplasmic; that stretch reads KLMGRGTKF.

The protein belongs to the myelin proteolipid protein family. Interacts with MAL.

It localises to the cell membrane. The protein localises to the myelin membrane. This is the major myelin protein from the central nervous system. It plays an important role in the formation or maintenance of the multilamellar structure of myelin. This Oryctolagus cuniculus (Rabbit) protein is Myelin proteolipid protein (PLP1).